We begin with the raw amino-acid sequence, 580 residues long: UPF0329 protein ECU06_0080 (580 aa).

Over residues Arg-308–Ala-330 the composition is skewed to basic and acidic residues. The interval Arg-308–Arg-384 is disordered. Over residues Lys-331 to Ser-340 the composition is skewed to basic residues. Acidic residues predominate over residues Ser-351–Glu-363. Residues Ala-372–Arg-384 are compositionally biased toward basic residues.

This sequence belongs to the UPF0329 family.

In Encephalitozoon cuniculi (strain GB-M1) (Microsporidian parasite), this protein is UPF0329 protein ECU06_0080.